The chain runs to 792 residues: Phenylalanine--tRNA ligase beta subunit (792 aa).

One can recognise a tRNA-binding domain in the interval glycine 39–alanine 147. The 76-residue stretch at proline 400–threonine 475 folds into the B5 domain. Mg(2+)-binding residues include aspartate 453, aspartate 459, glutamate 462, and glutamate 463. Residues serine 698–arginine 791 enclose the FDX-ACB domain.

The protein belongs to the phenylalanyl-tRNA synthetase beta subunit family. Type 1 subfamily. Tetramer of two alpha and two beta subunits. The cofactor is Mg(2+).

The protein localises to the cytoplasm. The enzyme catalyses tRNA(Phe) + L-phenylalanine + ATP = L-phenylalanyl-tRNA(Phe) + AMP + diphosphate + H(+). The polypeptide is Phenylalanine--tRNA ligase beta subunit (Xanthomonas axonopodis pv. citri (strain 306)).